The sequence spans 204 residues: Large ribosomal subunit protein bL25 (204 aa).

It belongs to the bacterial ribosomal protein bL25 family. CTC subfamily. As to quaternary structure, part of the 50S ribosomal subunit; part of the 5S rRNA/L5/L18/L25 subcomplex. Contacts the 5S rRNA. Binds to the 5S rRNA independently of L5 and L18.

This is one of the proteins that binds to the 5S RNA in the ribosome where it forms part of the central protuberance. This chain is Large ribosomal subunit protein bL25, found in Bordetella bronchiseptica (strain ATCC BAA-588 / NCTC 13252 / RB50) (Alcaligenes bronchisepticus).